Consider the following 169-residue polypeptide: Prolyl-tRNA synthetase associated domain-containing protein 1 (169 aa).

It belongs to the PRORSD1 family.

The protein is Prolyl-tRNA synthetase associated domain-containing protein 1 (Prorsd1) of Mus musculus (Mouse).